We begin with the raw amino-acid sequence, 239 residues long: 1-(5-phosphoribosyl)-5-[(5-phosphoribosylamino)methylideneamino] imidazole-4-carboxamide isomerase (239 aa).

The Proton acceptor role is filled by D8. D129 acts as the Proton donor in catalysis.

This sequence belongs to the HisA/HisF family.

It localises to the cytoplasm. It carries out the reaction 1-(5-phospho-beta-D-ribosyl)-5-[(5-phospho-beta-D-ribosylamino)methylideneamino]imidazole-4-carboxamide = 5-[(5-phospho-1-deoxy-D-ribulos-1-ylimino)methylamino]-1-(5-phospho-beta-D-ribosyl)imidazole-4-carboxamide. It functions in the pathway amino-acid biosynthesis; L-histidine biosynthesis; L-histidine from 5-phospho-alpha-D-ribose 1-diphosphate: step 4/9. The polypeptide is 1-(5-phosphoribosyl)-5-[(5-phosphoribosylamino)methylideneamino] imidazole-4-carboxamide isomerase (Legionella pneumophila (strain Corby)).